Here is a 631-residue protein sequence, read N- to C-terminus: Origin recognition complex subunit 1 (631 aa).

Composition is skewed to low complexity over residues 1–14 and 22–37; these read MTDE…YPPI and KLNN…NNNH. A disordered region spans residues 1–164; sequence MTDESSSSIS…EEEDEEGKFN (164 aa). Residues 55-80 show a composition bias toward basic and acidic residues; the sequence is DNEKIGFSDPENEKINKHKASFKDSN. Acidic residues predominate over residues 91 to 104; that stretch reads EDTDDDDYEDEDED. Over residues 105–133 the composition is skewed to basic and acidic residues; the sequence is ENHKIKDESDNSEDFNNHTKNTTDLDEGF. Residues 141–160 are compositionally biased toward acidic residues; the sequence is ESEEEEEEEEYEEEEEEDEE. Residues Val-230 and 265–273 contribute to the ATP site; that span reads GMPGTGKTA. Positions 361 and 362 each coordinate Mg(2+). Residues Glu-362, Asn-395, and Arg-460 each coordinate ATP.

Belongs to the ORC1 family. ORC is composed of six subunits.

The protein localises to the nucleus. Its function is as follows. Component of the origin recognition complex (ORC) that binds origins of replication. DNA-binding is ATP-dependent, however specific DNA sequences that define origins of replication have not been identified so far. ORC is required to assemble the pre-replication complex necessary to initiate DNA replication. This Dictyostelium discoideum (Social amoeba) protein is Origin recognition complex subunit 1 (orcA).